A 354-amino-acid polypeptide reads, in one-letter code: Histidinol-phosphate aminotransferase (354 aa).

K222 bears the N6-(pyridoxal phosphate)lysine mark.

It belongs to the class-II pyridoxal-phosphate-dependent aminotransferase family. Histidinol-phosphate aminotransferase subfamily. In terms of assembly, homodimer. Pyridoxal 5'-phosphate is required as a cofactor.

The catalysed reaction is L-histidinol phosphate + 2-oxoglutarate = 3-(imidazol-4-yl)-2-oxopropyl phosphate + L-glutamate. It participates in amino-acid biosynthesis; L-histidine biosynthesis; L-histidine from 5-phospho-alpha-D-ribose 1-diphosphate: step 7/9. The sequence is that of Histidinol-phosphate aminotransferase from Leuconostoc citreum (strain KM20).